A 327-amino-acid chain; its full sequence is tRNA uridine(34) hydroxylase (327 aa).

One can recognise a Rhodanese domain in the interval 123 to 217 (SDPEVLVVDT…YLEEVPQEQS (95 aa)). The active-site Cysteine persulfide intermediate is the Cys177.

This sequence belongs to the TrhO family.

The enzyme catalyses uridine(34) in tRNA + AH2 + O2 = 5-hydroxyuridine(34) in tRNA + A + H2O. In terms of biological role, catalyzes oxygen-dependent 5-hydroxyuridine (ho5U) modification at position 34 in tRNAs. In Vibrio cholerae serotype O1 (strain ATCC 39315 / El Tor Inaba N16961), this protein is tRNA uridine(34) hydroxylase.